We begin with the raw amino-acid sequence, 631 residues long: Chaperone protein DnaK (631 aa).

Phosphothreonine; by autocatalysis is present on threonine 175. The segment at 586-631 is disordered; sequence GAEGAAAGAGAAGAAGAGASAGSASGSDDDTVEAEVVDDDDDKDNK. Positions 602–611 are enriched in low complexity; the sequence is AGASAGSASG. The span at 612–631 shows a compositional bias: acidic residues; it reads SDDDTVEAEVVDDDDDKDNK.

The protein belongs to the heat shock protein 70 family.

Functionally, acts as a chaperone. This is Chaperone protein DnaK from Bifidobacterium longum subsp. infantis (strain ATCC 15697 / DSM 20088 / JCM 1222 / NCTC 11817 / S12).